Reading from the N-terminus, the 319-residue chain is Cytochrome f (319 aa).

Positions 1–34 (MQNRNTYEWTKKMTRLISVLVMIHIITRTSISNA) are cleaved as a signal peptide. The heme site is built by Y35, C55, C58, and H59. A helical membrane pass occupies residues 285–305 (VKGLLLFLASVILAQIFLVLK).

The protein belongs to the cytochrome f family. In terms of assembly, the 4 large subunits of the cytochrome b6-f complex are cytochrome b6, subunit IV (17 kDa polypeptide, petD), cytochrome f and the Rieske protein, while the 4 small subunits are PetG, PetL, PetM and PetN. The complex functions as a dimer. Heme is required as a cofactor.

The protein resides in the plastid. It is found in the chloroplast thylakoid membrane. In terms of biological role, component of the cytochrome b6-f complex, which mediates electron transfer between photosystem II (PSII) and photosystem I (PSI), cyclic electron flow around PSI, and state transitions. This Pinus koraiensis (Korean pine) protein is Cytochrome f.